The following is a 266-amino-acid chain: Respiratory nitrate reductase beta chain (266 aa).

4Fe-4S ferredoxin-type domains are found at residues 3-32 (VGMV…AWFN) and 30-61 (WFNN…KREE). The [4Fe-4S] cluster site is built by Cys-12, Cys-15, Cys-18, Cys-22, Cys-39, Cys-42, and Cys-47. Residues Cys-51 and Cys-73 each contribute to the [3Fe-4S] cluster site. Residues Cys-77, Cys-81, Cys-84, Cys-96, and Cys-100 each coordinate [4Fe-4S] cluster.

As to quaternary structure, heterotrimer composed of an alpha, a beta and a gamma chain. Alpha and beta are catalytic chains; gamma chains are involved in binding the enzyme complex to the cytoplasmic membrane. It depends on [4Fe-4S] cluster as a cofactor. Requires [3Fe-4S] cluster as cofactor.

It is found in the cell membrane. It localises to the cytoplasm. The catalysed reaction is nitrate + a quinol = a quinone + nitrite + H2O. With respect to regulation, inhibited by micromolar concentrations of azide. The nitrate reductase enzyme complex allows Bradyrhizobium sp. USDA 3045 to use nitrate as an electron acceptor during anaerobic growth. The beta chain is an electron transfer unit containing four cysteine clusters involved in the formation of iron-sulfur centers. Electrons are transferred from the gamma chain to the molybdenum cofactor of the alpha subunit. This Bradyrhizobium sp protein is Respiratory nitrate reductase beta chain (narH).